Reading from the N-terminus, the 209-residue chain is Thymidylate kinase (209 aa).

7–14 (GIDGAGKS) provides a ligand contact to ATP.

It belongs to the thymidylate kinase family.

The enzyme catalyses dTMP + ATP = dTDP + ADP. Functionally, phosphorylation of dTMP to form dTDP in both de novo and salvage pathways of dTTP synthesis. The polypeptide is Thymidylate kinase (Mycoplasma mobile (strain ATCC 43663 / 163K / NCTC 11711) (Mesomycoplasma mobile)).